Consider the following 699-residue polypeptide: Triacylglycerol hydrolase DDHD2 (699 aa).

Residues 1-11 show a composition bias toward polar residues; it reads MSSGESHQEQL. The interval 1–25 is disordered; that stretch reads MSSGESHQEQLSQSDPSPSPNSCSS. The span at 12-25 shows a compositional bias: low complexity; sequence SQSDPSPSPNSCSS. The WWE domain maps to 30 to 112; sequence DMDASSSYEP…WDELPSEVRR (83 aa). Ser351 acts as the Nucleophile in catalysis. An SAM domain is found at 383–445; that stretch reads DRGDASTLEE…KILNHFSARK (63 aa). Ser447 is modified (phosphoserine). The DDHD domain occupies 484–688; that stretch reads LNYKPEIFFA…VLLVLKEIYQ (205 aa). The segment at 599–635 is disordered; it reads QASETAEETEAEPESSSEKSNEANTEEPPVEVKEEAP. Over residues 603–613 the composition is skewed to acidic residues; sequence TAEETEAEPES.

It belongs to the PA-PLA1 family. As to quaternary structure, forms homooligomers and, to a much smaller extent, heterooligomers with DDHD1.

It is found in the cytoplasm. It localises to the cytosol. The protein resides in the endoplasmic reticulum-Golgi intermediate compartment. Its subcellular location is the golgi apparatus. The protein localises to the cis-Golgi network. It catalyses the reaction a triacylglycerol + H2O = a diacylglycerol + a fatty acid + H(+). The catalysed reaction is a diacylglycerol + H2O = a monoacylglycerol + a fatty acid + H(+). It carries out the reaction a 1,3-diacylglycerol + H2O = a 1-acylglycerol + a fatty acid + H(+). The enzyme catalyses a 1-acylglycerol + H2O = glycerol + a fatty acid + H(+). It catalyses the reaction 1,2,3-tri-(9Z-octadecenoyl)-glycerol + H2O = di-(9Z)-octadecenoylglycerol + (9Z)-octadecenoate + H(+). The catalysed reaction is di-(9Z)-octadecenoylglycerol + H2O = (9Z-octadecenoyl)-glycerol + (9Z)-octadecenoate + H(+). It carries out the reaction 1,3-di-(9Z-octadecenoyl)-glycerol + H2O = 1-(9Z-octadecenoyl)-glycerol + (9Z)-octadecenoate + H(+). The enzyme catalyses trihexadecanoylglycerol + H2O = dihexadecanoylglycerol + hexadecanoate + H(+). It catalyses the reaction 1,2-di-(9Z-octadecenoyl)-sn-glycero-3-phosphocholine + H2O = (9Z-octadecenoyl)-sn-glycero-3-phosphocholine + (9Z)-octadecenoate + H(+). The catalysed reaction is 1-(9Z-octadecenoyl)-glycerol + H2O = glycerol + (9Z)-octadecenoate + H(+). It carries out the reaction 1,2-di-(9Z-octadecenoyl)-sn-glycero-3-phosphate + H2O = 2-(9Z-octadecenoyl)-sn-glycero-3-phosphate + (9Z)-octadecenoate + H(+). The enzyme catalyses 1-hexadecanoyl-2-(9Z-octadecenoyl)-sn-glycero-3-phosphate + H2O = 2-(9Z-octadecenoyl)-sn-glycero-3-phosphate + hexadecanoate + H(+). It catalyses the reaction 1-hexadecanoyl-2-(9Z-octadecenoyl)-sn-glycero-3-phosphoethanolamine + H2O = 2-(9Z-octadecenoyl)-sn-glycero-3-phosphoethanolamine + hexadecanoate + H(+). The catalysed reaction is 1-hexadecanoyl-2-(9Z-octadecenoyl)-sn-glycero-3-phospho-L-serine + H2O = 2-(9Z-octadecenoyl)-sn-glycero-3-phospho-L-serine + hexadecanoate + H(+). It carries out the reaction 1-hexadecanoyl-2-(9Z-octadecenoyl)-sn-glycero-3-phosphocholine + H2O = 2-(9Z-octadecenoyl)-sn-glycero-3-phosphocholine + hexadecanoate + H(+). Diacylglycerol (DAG) and triacylglycerol (TAG) lipase that is required for proper lipid homeostasis in the central nervous system. It cooperates with PNPLA2/ATGL in neuronal TAG catabolism and hydrolyzes sn-1,3-DAG downstream of PNPLA2/ATGL. In vitro, also acts as a phospholipase that hydrolyzes preferentially phosphatidic acids, including 1,2-dioleoyl-sn-phosphatidic acid, phosphatidylcholine and phosphatidylethanolamine. Specifically binds to phosphatidylinositol 3-phosphate (PI(3)P), phosphatidylinositol 4-phosphate (PI(4)P), phosphatidylinositol 5-phosphate (PI(5)P) and possibly phosphatidylinositol 4,5-bisphosphate (PI(4,5)P2). May be involved in the maintenance of the endoplasmic reticulum and/or Golgi structures. May regulate the transport between Golgi apparatus and plasma membrane. This is Triacylglycerol hydrolase DDHD2 from Mus musculus (Mouse).